The sequence spans 507 residues: Glutamyl-tRNA(Gln) amidotransferase subunit A, mitochondrial (507 aa).

Residues 29–51 (THPPEPIPPPPPPAPSSSPSPKQ) are disordered. Pro residues predominate over residues 31-46 (PPEPIPPPPPPAPSSS). Active-site charge relay system residues include Lys-57 and Ser-135. Ser-159 serves as the catalytic Acyl-ester intermediate.

This sequence belongs to the amidase family. GatA subfamily. In terms of assembly, subunit of the heterotrimeric GatCAB amidotransferase (AdT) complex, composed of A, B and C subunits.

It is found in the mitochondrion. The enzyme catalyses L-glutamyl-tRNA(Gln) + L-glutamine + ATP + H2O = L-glutaminyl-tRNA(Gln) + L-glutamate + ADP + phosphate + H(+). Allows the formation of correctly charged Gln-tRNA(Gln) through the transamidation of misacylated Glu-tRNA(Gln) in the mitochondria. The reaction takes place in the presence of glutamine and ATP through an activated gamma-phospho-Glu-tRNA(Gln). In Podospora anserina (strain S / ATCC MYA-4624 / DSM 980 / FGSC 10383) (Pleurage anserina), this protein is Glutamyl-tRNA(Gln) amidotransferase subunit A, mitochondrial.